Consider the following 392-residue polypeptide: 6-aminohexanoate-dimer hydrolase (392 aa).

Positions 1 to 27 (MNTPTTGSHPARYPSAAAGEPTLDSWQ) are disordered. The active site involves S112.

It catalyses the reaction [N-(6-aminohexanoyl)](n) + H2O = [N-(6-aminohexanoyl)](n-1) + 6-aminohexanoate. The catalysed reaction is N-(6-aminohexanoyl)-6-aminohexanoate + H2O = 2 6-aminohexanoate. Its pathway is xenobiotic degradation; nylon-6 oligomer degradation. Its function is as follows. Involved in nylon oligomer degradation. The polypeptide is 6-aminohexanoate-dimer hydrolase (Paenarthrobacter ureafaciens).